A 62-amino-acid chain; its full sequence is Conotoxin Pl168 (62 aa).

The signal sequence occupies residues 1 to 21 (MGMRMMFTVFLLVVLATTVVS). Positions 22–40 (FTLDRASDGANAAADLVAR) are excised as a propeptide. Disulfide bonds link C46-C52 and C47-C61.

The protein belongs to the conotoxin A superfamily. Both Pro-53 and Pro-62 are not in cis/trans isomerization. In terms of tissue distribution, expressed by the venom duct.

It is found in the secreted. In terms of biological role, probable neurotoxin with unknown target. Possibly targets ion channels. This Conus planorbis (Planorbis cone) protein is Conotoxin Pl168.